The chain runs to 397 residues: Thioredoxin-interacting protein (397 aa).

Residue Lys213 forms a Glycyl lysine isopeptide (Lys-Gly) (interchain with G-Cter in ubiquitin) linkage. Residue Ser362 is modified to Phosphoserine.

This sequence belongs to the arrestin family. As to quaternary structure, homodimer; disulfide-linked. Interacts with TXN/thioredoxin through its redox-active site. Interacts with transcriptional repressors ZBTB16, ZBTB32 and HDAC1. Interacts with DDIT4. Ubiquitinated; undergoes heterotypic 'Lys-48'-/'Lys-63'-branched polyubiquitination catalyzed by ITCH and UBR5 resulting in proteasomal degradation. Deubiquitinated by USP5, leading to TXNIP stabilization. Ubiquitously expressed.

The protein localises to the cytoplasm. In terms of biological role, may act as an oxidative stress mediator by inhibiting thioredoxin activity or by limiting its bioavailability. Interacts with COPS5 and restores COPS5-induced suppression of CDKN1B stability, blocking the COPS5-mediated translocation of CDKN1B from the nucleus to the cytoplasm. Functions as a transcriptional repressor, possibly by acting as a bridge molecule between transcription factors and corepressor complexes, and over-expression will induce G0/G1 cell cycle arrest. Required for the maturation of natural killer cells. Acts as a suppressor of tumor cell growth. Inhibits the proteasomal degradation of DDIT4, and thereby contributes to the inhibition of the mammalian target of rapamycin complex 1 (mTORC1). The protein is Thioredoxin-interacting protein (Txnip) of Mus musculus (Mouse).